An 86-amino-acid chain; its full sequence is Large ribosomal subunit protein bL27 (86 aa).

The segment at 1–26 (MATKKAGGSSRNGRDSAGRRLGIKKS) is disordered.

This sequence belongs to the bacterial ribosomal protein bL27 family.

The sequence is that of Large ribosomal subunit protein bL27 from Rickettsia typhi (strain ATCC VR-144 / Wilmington).